A 97-amino-acid polypeptide reads, in one-letter code: UPF0235 protein HAPS_1504 (97 aa).

This sequence belongs to the UPF0235 family.

This Glaesserella parasuis serovar 5 (strain SH0165) (Haemophilus parasuis) protein is UPF0235 protein HAPS_1504.